A 183-amino-acid polypeptide reads, in one-letter code: uncharacterized protein (183 aa).

Residues 54 to 89 (DAASQSDPLPGGDGLTGGDSKATRRTSPRYYPPSEA) form a disordered region.

This is an uncharacterized protein from Human cytomegalovirus (strain AD169) (HHV-5).